An 845-amino-acid chain; its full sequence is MGKQQKKHSKGRLDRYYYLAKEKGYRARSSFKIIQINEKYGHFLEKSKVVIDLCAAPGSWCQVASQLCPINSLIIGVDIVPIKPLPNVITFQSDITTEDCRSRLRGHMKTWKADTVLHDGAPNVGLGWVQDAFTQSQLTLQALKLAVENLTAGGTFVTKIFRSRDYNNLMWVFQQLFEKVEATKPPASRNVSAEIFVVCKGFKAPKKLDPRLLDPKEVFEELGGGNESKQNNEAKIFNPEKFSSQRQRQGYQEGDYTLFHTMPIMDFIKQDDPINQLGSLNKFDLPAPKDDDNDDDDHDHEWKILSKLKLCTPELLECIKDLKVLGRKEFKMILKFRKQARDILGIDKDEKEEEEENPKIEVEPLTEEQKIDQELQDLINKQKQKAKRLKKNANELKQKEIIRNQMNMLTDMNIGIEAAQIGADSLFNLKTAEKTGQLDKLAKGKKKMIFNDEELAKDNEIHIDEEEINDNDKDSADELDELENQLDDMYHQYQARKAERDANYRAKQARGDADDEAWNGIEEDNDDVESGKDYEMESESDDDDDEHIRLIAEKKSNGSLSRTARNFFASDSIFNELSDDVILEEIENKTKGSNGKMVESIQEQVANDNNENDDGDNDEEESDFEIVPNQKSDDDDDDESMNSDDDEVSTTTKSTTHQQKVDLATVEAMTLAHQVALGQKNKYDLIDEGINRYSFRDKDNLPDWFIDDEKKHSKLIKPITKEAAIAIKEKQKQLNARPIKKVLEAQSRKKLRALKRLEKIKKKSDLINEDSGKSERDKADEISKLMKKLNKKQKQKPKTTVVVARGSNRGLSGRPKGVKGKYKMVDGVMKNEQRALKRIAKKYKK.

Glycine 58, tryptophan 60, aspartate 78, aspartate 94, and aspartate 119 together coordinate S-adenosyl-L-methionine. The Proton acceptor role is filled by lysine 159. Disordered regions lie at residues 223–247 and 279–298; these read GGGNESKQNNEAKIFNPEKFSSQRQ and SLNKFDLPAPKDDDNDDDDH. 2 coiled-coil regions span residues 366–402 and 464–502; these read TEEQKIDQELQDLINKQKQKAKRLKKNANELKQKEII and DEEEINDNDKDSADELDELENQLDDMYHQYQARKAERDA. The span at 496-512 shows a compositional bias: basic and acidic residues; it reads RKAERDANYRAKQARGD. 3 disordered regions span residues 496-546, 587-660, and 788-821; these read RKAE…DDDE, ENKT…HQQK, and KLNKKQKQKPKTTVVVARGSNRGLSGRPKGVKGK. Composition is skewed to acidic residues over residues 513 to 528, 536 to 545, 610 to 624, and 633 to 648; these read ADDEAWNGIEEDNDDV, MESESDDDDD, NENDDGDNDEEESDF, and DDDDDDESMNSDDDEV. The stretch at 739–796 forms a coiled coil; it reads IKKVLEAQSRKKLRALKRLEKIKKKSDLINEDSGKSERDKADEISKLMKKLNKKQKQK. The segment covering 788–797 has biased composition (basic residues); sequence KLNKKQKQKP.

This sequence belongs to the class I-like SAM-binding methyltransferase superfamily. RNA methyltransferase RlmE family. SPB1 subfamily. Component of the nucleolar and nucleoplasmic pre-60S ribosomal particle.

It is found in the nucleus. The protein localises to the nucleolus. It catalyses the reaction a ribonucleotide in rRNA + S-adenosyl-L-methionine = a 2'-O-methylribonucleotide in rRNA + S-adenosyl-L-homocysteine + H(+). Its function is as follows. Required for proper assembly of pre-ribosomal particles during the biogenesis of the 60S ribosomal subunit. This chain is AdoMet-dependent rRNA methyltransferase SPB1, found in Candida albicans (strain SC5314 / ATCC MYA-2876) (Yeast).